A 569-amino-acid chain; its full sequence is MDAGSSRSLENAVNRIYHDQLVPKINTSKKMSTLAHPPNILEMSQEIKKNCGGKQVEITLERTKMTKGIKEKQSNDLEKAAFKRKAEGEEKPTRKKQAKITELDNQLITMPLPHIPLKNIMDVEMKLVYIDEMGVRYEFVESFMSTGSQPTCQAAEIVDPLSVHNFSFLPQIDKWLQVALKDASSCYRQKKYALAAGQFRTALELCSKGAVLGEPFDAPAEDIASVASFIETKLVTCYLRMRKPDLALNHAHRSIVLNPAYFRNHLRQATVFRCLERYSEAARSAMIADYMFWLGGGREESISKLIKLYWQAMIEEAITRAESFSVMYTPFATKIRADKIEKVKDAFTKTHPAYAEYMYTDLQALHMLPQTVDWSSFPPQQYLLTLGFKNKDDGKFLEKISSRKLPIFTEHKTPFGLTREDTVRQMETMGKRILPILDFIRSTQLNGSFPASSGVMEKLQYASLLSQLQRVKEQSQVINQAMAELATIPYLQDISQQEAELLQSLMADAMDTLEGRRNNNERVWNMIQKVGQIEDFLYQLEDSFLKTKKLRTARRQKTKMKRLQTVQQR.

Positions 67–92 (KGIKEKQSNDLEKAAFKRKAEGEEKP) are enriched in basic and acidic residues. The segment at 67–96 (KGIKEKQSNDLEKAAFKRKAEGEEKPTRKK) is disordered.

The protein belongs to the SPATA16 family. Expressed in testis.

The protein resides in the golgi apparatus. It is found in the cytoplasmic vesicle. The protein localises to the secretory vesicle. It localises to the acrosome. Essential for spermiogenesis and male fertility. Involved in the formation of sperm acrosome during spermatogenesis. This Homo sapiens (Human) protein is Spermatogenesis-associated protein 16 (SPATA16).